The following is a 696-amino-acid chain: F-box/LRR-repeat protein 5 (696 aa).

Residues 1-159 (MAPFPDEVDV…IKKQVIAQHS (159 aa)) form a hemerythrin-like region. His15, His57, Glu58, Glu61, His80, His126, and Glu130 together coordinate Fe(3+). Residues 205–251 (STHISQLPTEILLCLFRYLGPEDLCHCGQVCSAWSDLAKTGSLWRHL) form the F-box domain. 6 LRR repeats span residues 343–367 (SSTV…LDLT), 368–395 (QTDV…DLSG), 396–421 (CEKL…TCSE), 582–612 (CSSG…SLSG), 613–640 (CYQV…NLSG), and 641–666 (CLLI…HFYY). Cys667, Cys681, Cys691, and Cys692 together coordinate [2Fe-2S] cluster.

Part of a SCF (SKP1-cullin-F-box) protein ligase complex. [2Fe-2S] cluster serves as cofactor. In terms of processing, ubiquitinated upon iron and oxygen depletion, leading to its degradation by the proteasome. Ubiquitination is regulated by the hemerythrin-like region that acts as an oxygen and iron sensor.

The protein resides in the cytoplasm. It is found in the perinuclear region. Its subcellular location is the nucleus. It functions in the pathway protein modification; protein ubiquitination. Component of some SCF (SKP1-cullin-F-box) protein ligase complex that plays a central role in iron homeostasis by promoting the ubiquitination and subsequent degradation of ireb2/irp2. Upon high iron and oxygen level, it specifically recognizes and binds ireb2/irp2, promoting its ubiquitination and degradation by the proteasome. In Salmo salar (Atlantic salmon), this protein is F-box/LRR-repeat protein 5 (fbxl5).